A 756-amino-acid polypeptide reads, in one-letter code: ATP-dependent 6-phosphofructokinase 2 (756 aa).

The N-terminal catalytic PFK domain 1 stretch occupies residues 1 to 393 (MEQKFKKGKD…KQTYLNFVSI (393 aa)). ATP is bound by residues glycine 20, 81–82 (RC), and 111–114 (GDGS). Aspartate 112 is a Mg(2+) binding site. Substrate-binding positions include 157 to 159 (SID), arginine 194, 201 to 203 (MGR), glutamate 257, arginine 285, and 291 to 294 (HLQR). The active-site Proton acceptor is the aspartate 159. The tract at residues 394-404 (PLSTTMPSRTK) is interdomain linker. A C-terminal regulatory PFK domain 2 region spans residues 405–756 (TFAVVHIGSP…KKPQEAVLSS (352 aa)). Beta-D-fructose 2,6-bisphosphate contacts are provided by residues arginine 474, 530–534 (TISNN), 575–577 (MGS), glutamate 632, arginine 658, and 664–667 (YSQL).

It belongs to the phosphofructokinase type A (PFKA) family. ATP-dependent PFK group I subfamily. Eukaryotic two domain clade 'E' sub-subfamily. As to quaternary structure, homotetramer. Mg(2+) serves as cofactor.

It is found in the cytoplasm. The catalysed reaction is beta-D-fructose 6-phosphate + ATP = beta-D-fructose 1,6-bisphosphate + ADP + H(+). Its pathway is carbohydrate degradation; glycolysis; D-glyceraldehyde 3-phosphate and glycerone phosphate from D-glucose: step 3/4. Allosterically activated by ADP, AMP, or fructose 2,6-bisphosphate, and allosterically inhibited by ATP or citrate. In terms of biological role, catalyzes the phosphorylation of D-fructose 6-phosphate to fructose 1,6-bisphosphate by ATP, the first committing step of glycolysis. This chain is ATP-dependent 6-phosphofructokinase 2, found in Caenorhabditis elegans.